Here is a 501-residue protein sequence, read N- to C-terminus: UDP-N-acetylmuramate--L-alanine ligase (501 aa).

An ATP-binding site is contributed by 130-136 (GTHGKTS).

It belongs to the MurCDEF family.

The protein localises to the cytoplasm. The catalysed reaction is UDP-N-acetyl-alpha-D-muramate + L-alanine + ATP = UDP-N-acetyl-alpha-D-muramoyl-L-alanine + ADP + phosphate + H(+). It functions in the pathway cell wall biogenesis; peptidoglycan biosynthesis. In terms of biological role, cell wall formation. The sequence is that of UDP-N-acetylmuramate--L-alanine ligase from Nocardia farcinica (strain IFM 10152).